The following is a 505-amino-acid chain: ATP synthase subunit alpha, chloroplastic (505 aa).

Residue 170 to 177 participates in ATP binding; the sequence is GDRQTGKT.

The protein belongs to the ATPase alpha/beta chains family. F-type ATPases have 2 components, CF(1) - the catalytic core - and CF(0) - the membrane proton channel. CF(1) has five subunits: alpha(3), beta(3), gamma(1), delta(1), epsilon(1). CF(0) has four main subunits: a, b, b' and c.

It is found in the plastid. It localises to the chloroplast thylakoid membrane. It carries out the reaction ATP + H2O + 4 H(+)(in) = ADP + phosphate + 5 H(+)(out). Its function is as follows. Produces ATP from ADP in the presence of a proton gradient across the membrane. The alpha chain is a regulatory subunit. The polypeptide is ATP synthase subunit alpha, chloroplastic (Phaeodactylum tricornutum (strain CCAP 1055/1)).